The chain runs to 1389 residues: DNA-directed RNA polymerase subunit beta'' (1389 aa).

Cysteine 224, cysteine 295, cysteine 302, and cysteine 305 together coordinate Zn(2+).

Belongs to the RNA polymerase beta' chain family. RpoC2 subfamily. As to quaternary structure, in plastids the minimal PEP RNA polymerase catalytic core is composed of four subunits: alpha, beta, beta', and beta''. When a (nuclear-encoded) sigma factor is associated with the core the holoenzyme is formed, which can initiate transcription. Zn(2+) serves as cofactor.

The protein resides in the plastid. It is found in the chloroplast. It catalyses the reaction RNA(n) + a ribonucleoside 5'-triphosphate = RNA(n+1) + diphosphate. Its function is as follows. DNA-dependent RNA polymerase catalyzes the transcription of DNA into RNA using the four ribonucleoside triphosphates as substrates. The sequence is that of DNA-directed RNA polymerase subunit beta'' from Atropa belladonna (Belladonna).